A 254-amino-acid chain; its full sequence is Tryptophan synthase alpha chain (254 aa).

Residues glutamate 48 and aspartate 59 each act as proton acceptor in the active site.

The protein belongs to the TrpA family. As to quaternary structure, tetramer of two alpha and two beta chains.

It catalyses the reaction (1S,2R)-1-C-(indol-3-yl)glycerol 3-phosphate + L-serine = D-glyceraldehyde 3-phosphate + L-tryptophan + H2O. It functions in the pathway amino-acid biosynthesis; L-tryptophan biosynthesis; L-tryptophan from chorismate: step 5/5. The alpha subunit is responsible for the aldol cleavage of indoleglycerol phosphate to indole and glyceraldehyde 3-phosphate. In Desulfotalea psychrophila (strain LSv54 / DSM 12343), this protein is Tryptophan synthase alpha chain.